A 108-amino-acid chain; its full sequence is E3 ubiquitin-protein ligase Midline-1 (108 aa).

In terms of domain architecture, B30.2/SPRY spans Lys1 to His100.

Belongs to the TRIM/RBCC family. As to quaternary structure, homodimer or heterodimer with MID2. Interacts with IGBP1.

The protein localises to the cytoplasm. Its subcellular location is the cytoskeleton. The catalysed reaction is S-ubiquitinyl-[E2 ubiquitin-conjugating enzyme]-L-cysteine + [acceptor protein]-L-lysine = [E2 ubiquitin-conjugating enzyme]-L-cysteine + N(6)-ubiquitinyl-[acceptor protein]-L-lysine.. Functionally, has E3 ubiquitin ligase activity towards IGBP1, promoting its monoubiquitination, which results in deprotection of the catalytic subunit of protein phosphatase PP2A, and its subsequent degradation by polyubiquitination. The polypeptide is E3 ubiquitin-protein ligase Midline-1 (Mid1) (Mus caroli (Ryukyu mouse)).